A 358-amino-acid polypeptide reads, in one-letter code: Peptide chain release factor 1 (358 aa).

Gln237 carries the N5-methylglutamine modification. A compositionally biased stretch (basic and acidic residues) spans 291-309 (EESGYRKLAGHGDRSEKIR). Positions 291 to 313 (EESGYRKLAGHGDRSEKIRTYNY) are disordered.

This sequence belongs to the prokaryotic/mitochondrial release factor family. Methylated by PrmC. Methylation increases the termination efficiency of RF1.

It is found in the cytoplasm. In terms of biological role, peptide chain release factor 1 directs the termination of translation in response to the peptide chain termination codons UAG and UAA. This is Peptide chain release factor 1 from Mycoplasmopsis agalactiae (strain NCTC 10123 / CIP 59.7 / PG2) (Mycoplasma agalactiae).